A 266-amino-acid chain; its full sequence is Protein-ADP-ribose hydrolase (266 aa).

The 192-residue stretch at 74-265 folds into the Macro domain; that stretch reads TDLKDLKPIK…LYKEALNRDA (192 aa). Positions 93, 94, and 107 each coordinate ADP-D-ribose. Zn(2+)-binding residues include Cys-113, His-118, and Cys-120. The ADP-D-ribose site is built by Cys-120, Ile-121, Asp-122, Ser-212, Thr-213, Gly-214, and Phe-216.

It belongs to the MacroD-type family. Zn-Macro subfamily. Monomer. Directly interacts with the lipoylated form of GcvH-L. Zn(2+) serves as cofactor.

It catalyses the reaction 4-O-(ADP-D-ribosyl)-L-aspartyl-[protein] + H2O = L-aspartyl-[protein] + ADP-D-ribose + H(+). ADP-ribosylhydrolase that specifically reverses the SirTM-mediated mono-ADP-ribosylation at an asparatate residue of GcvH-L (SAV0324), by releasing ADP-ribose from the target protein. May play a role in the regulation of the response to host-induced oxidative stress. The sequence is that of Protein-ADP-ribose hydrolase from Staphylococcus aureus (strain Mu50 / ATCC 700699).